Consider the following 331-residue polypeptide: Putative ankyrin repeat protein RBE_0261 (331 aa).

An ANK repeat occupies 94 to 159 (QGENVIHKCV…KAKNTLLNIV (66 aa)).

The sequence is that of Putative ankyrin repeat protein RBE_0261 from Rickettsia bellii (strain RML369-C).